The following is a 415-amino-acid chain: Esterase FrsA (415 aa).

This sequence belongs to the FrsA family.

The enzyme catalyses a carboxylic ester + H2O = an alcohol + a carboxylate + H(+). In terms of biological role, catalyzes the hydrolysis of esters. This chain is Esterase FrsA, found in Serratia proteamaculans (strain 568).